The chain runs to 407 residues: Na(+)-translocating NADH-quinone reductase subunit F (407 aa).

The chain crosses the membrane as a helical span at residues 3-23 (IILGVAMFTGIVMVLVLLILF). The 2Fe-2S ferredoxin-type domain maps to 32-126 (GDIAVEVNGD…NLKIELPEEI (95 aa)). [2Fe-2S] cluster is bound by residues Cys-69, Cys-75, Cys-78, and Cys-110. The FAD-binding FR-type domain occupies 129 to 269 (VKKWECEVIS…SGPFGEFFAK (141 aa)).

This sequence belongs to the NqrF family. In terms of assembly, composed of six subunits; NqrA, NqrB, NqrC, NqrD, NqrE and NqrF. Requires [2Fe-2S] cluster as cofactor. FAD serves as cofactor.

Its subcellular location is the cell inner membrane. The catalysed reaction is a ubiquinone + n Na(+)(in) + NADH + H(+) = a ubiquinol + n Na(+)(out) + NAD(+). In terms of biological role, NQR complex catalyzes the reduction of ubiquinone-1 to ubiquinol by two successive reactions, coupled with the transport of Na(+) ions from the cytoplasm to the periplasm. The first step is catalyzed by NqrF, which accepts electrons from NADH and reduces ubiquinone-1 to ubisemiquinone by a one-electron transfer pathway. This Serratia proteamaculans (strain 568) protein is Na(+)-translocating NADH-quinone reductase subunit F.